Consider the following 348-residue polypeptide: MSHLVGLVRAVQANYYRVRLREPSNGVEELLCVRRARLKKMGQQVCVGDWVVVSHPDWPGQRGAIAEILPRRNQLSRPAIANVDQILLLFALADPPADVHPITRFLLTAEGLNVEIQVVFTKADLVSPQEQQQWRDRLQQWGYRCHVLSLTQGIAWQALRPHLANKITVVCGPSGVGKSSLIRHLTPREDIRVGAVSDHWHRGRHTTRHVELFPLAEGGWIADTPGFNQPELPPDPRQLAAAFPEIRQRLSQDQCLFDNCRHDQEPGCCVRGNWERYPLYIEYLHQLETIASAEPSLAKVPLVKAKSDRQGQQRLEPLLDAKKYRRRSRRQQHQHVNPMAEEVLDSEW.

The region spanning 72–230 (RNQLSRPAIA…IADTPGFNQP (159 aa)) is the CP-type G domain. GTP contacts are provided by residues 121-124 (TKAD) and 172-180 (GPSGVGKSS). Positions 255, 260, 262, and 268 each coordinate Zn(2+). Residues 305–322 (AKSDRQGQQRLEPLLDAK) are compositionally biased toward basic and acidic residues. A disordered region spans residues 305-348 (AKSDRQGQQRLEPLLDAKKYRRRSRRQQHQHVNPMAEEVLDSEW). A compositionally biased stretch (basic residues) spans 323–333 (KYRRRSRRQQH).

The protein belongs to the TRAFAC class YlqF/YawG GTPase family. RsgA subfamily. Monomer. Associates with 30S ribosomal subunit, binds 16S rRNA. The cofactor is Zn(2+).

Its subcellular location is the cytoplasm. Its function is as follows. One of several proteins that assist in the late maturation steps of the functional core of the 30S ribosomal subunit. Helps release RbfA from mature subunits. May play a role in the assembly of ribosomal proteins into the subunit. Circularly permuted GTPase that catalyzes slow GTP hydrolysis, GTPase activity is stimulated by the 30S ribosomal subunit. This chain is Small ribosomal subunit biogenesis GTPase RsgA, found in Thermosynechococcus vestitus (strain NIES-2133 / IAM M-273 / BP-1).